We begin with the raw amino-acid sequence, 557 residues long: uncharacterized protein (557 aa).

The signal sequence occupies residues 1 to 30 (MAPRRRRHTRIAGLRVVGTATLVAATTLTA). The N-palmitoyl cysteine moiety is linked to residue Cys31. Cys31 carries the S-diacylglycerol cysteine lipid modification.

To M.bovis Mb2616c and M.leprae ML0489.

It is found in the cell membrane. This is an uncharacterized protein from Mycobacterium tuberculosis (strain ATCC 25618 / H37Rv).